Consider the following 188-residue polypeptide: Acireductone dioxygenase (188 aa).

4 residues coordinate Fe(2+): H97, H99, E103, and H141. 4 residues coordinate Ni(2+): H97, H99, E103, and H141.

This sequence belongs to the acireductone dioxygenase (ARD) family. In terms of assembly, monomer. Requires Fe(2+) as cofactor. It depends on Ni(2+) as a cofactor.

The catalysed reaction is 1,2-dihydroxy-5-(methylsulfanyl)pent-1-en-3-one + O2 = 3-(methylsulfanyl)propanoate + CO + formate + 2 H(+). It catalyses the reaction 1,2-dihydroxy-5-(methylsulfanyl)pent-1-en-3-one + O2 = 4-methylsulfanyl-2-oxobutanoate + formate + 2 H(+). Its pathway is amino-acid biosynthesis; L-methionine biosynthesis via salvage pathway; L-methionine from S-methyl-5-thio-alpha-D-ribose 1-phosphate: step 5/6. In terms of biological role, catalyzes 2 different reactions between oxygen and the acireductone 1,2-dihydroxy-3-keto-5-methylthiopentene (DHK-MTPene) depending upon the metal bound in the active site. Fe-containing acireductone dioxygenase (Fe-ARD) produces formate and 2-keto-4-methylthiobutyrate (KMTB), the alpha-ketoacid precursor of methionine in the methionine recycle pathway. Ni-containing acireductone dioxygenase (Ni-ARD) produces methylthiopropionate, carbon monoxide and formate, and does not lie on the methionine recycle pathway. The protein is Acireductone dioxygenase of Xylella fastidiosa (strain M23).